Reading from the N-terminus, the 152-residue chain is Peptide deformylase (152 aa).

Residues Cys-88 and His-130 each coordinate Fe cation. Glu-131 is an active-site residue. His-134 is a Fe cation binding site.

It belongs to the polypeptide deformylase family. It depends on Fe(2+) as a cofactor.

The enzyme catalyses N-terminal N-formyl-L-methionyl-[peptide] + H2O = N-terminal L-methionyl-[peptide] + formate. Its function is as follows. Removes the formyl group from the N-terminal Met of newly synthesized proteins. Requires at least a dipeptide for an efficient rate of reaction. N-terminal L-methionine is a prerequisite for activity but the enzyme has broad specificity at other positions. This Carboxydothermus hydrogenoformans (strain ATCC BAA-161 / DSM 6008 / Z-2901) protein is Peptide deformylase.